The following is a 468-amino-acid chain: 6-phospho-beta-galactosidase (468 aa).

Residues Gln-19, His-116, Asn-159, Glu-160, and Asn-297 each coordinate D-galactose 6-phosphate. The Proton donor role is filled by Glu-160. Catalysis depends on Glu-375, which acts as the Nucleophile. Residues Ser-428, Trp-429, Lys-435, and Tyr-437 each contribute to the D-galactose 6-phosphate site.

It belongs to the glycosyl hydrolase 1 family.

It carries out the reaction a 6-phospho-beta-D-galactoside + H2O = D-galactose 6-phosphate + an alcohol. It participates in carbohydrate metabolism; lactose degradation; D-galactose 6-phosphate and beta-D-glucose from lactose 6-phosphate: step 1/1. The chain is 6-phospho-beta-galactosidase from Streptococcus pyogenes serotype M5 (strain Manfredo).